A 288-amino-acid polypeptide reads, in one-letter code: Acetyl-coenzyme A carboxylase carboxyl transferase subunit beta (288 aa).

The CoA carboxyltransferase N-terminal domain maps to 34 to 288; it reads LFAKCPACKH…HLVAFHGGGQ (255 aa). Cys-38, Cys-41, Cys-56, and Cys-59 together coordinate Zn(2+). Residues 38–59 form a C4-type zinc finger; sequence CPACKHMIYKKDLGLAKICPTC.

This sequence belongs to the AccD/PCCB family. As to quaternary structure, acetyl-CoA carboxylase is a heterohexamer composed of biotin carboxyl carrier protein (AccB), biotin carboxylase (AccC) and two subunits each of ACCase subunit alpha (AccA) and ACCase subunit beta (AccD). Zn(2+) serves as cofactor.

The protein localises to the cytoplasm. The catalysed reaction is N(6)-carboxybiotinyl-L-lysyl-[protein] + acetyl-CoA = N(6)-biotinyl-L-lysyl-[protein] + malonyl-CoA. The protein operates within lipid metabolism; malonyl-CoA biosynthesis; malonyl-CoA from acetyl-CoA: step 1/1. Functionally, component of the acetyl coenzyme A carboxylase (ACC) complex. Biotin carboxylase (BC) catalyzes the carboxylation of biotin on its carrier protein (BCCP) and then the CO(2) group is transferred by the transcarboxylase to acetyl-CoA to form malonyl-CoA. This chain is Acetyl-coenzyme A carboxylase carboxyl transferase subunit beta, found in Streptococcus pyogenes serotype M6 (strain ATCC BAA-946 / MGAS10394).